The sequence spans 139 residues: Nucleoside diphosphate kinase (139 aa).

Lys-9, Phe-57, Arg-85, Thr-91, Arg-102, and Asn-112 together coordinate ATP. His-115 serves as the catalytic Pros-phosphohistidine intermediate.

It belongs to the NDK family. Homotetramer. Mg(2+) is required as a cofactor.

The protein localises to the cytoplasm. It catalyses the reaction a 2'-deoxyribonucleoside 5'-diphosphate + ATP = a 2'-deoxyribonucleoside 5'-triphosphate + ADP. The enzyme catalyses a ribonucleoside 5'-diphosphate + ATP = a ribonucleoside 5'-triphosphate + ADP. Functionally, major role in the synthesis of nucleoside triphosphates other than ATP. The ATP gamma phosphate is transferred to the NDP beta phosphate via a ping-pong mechanism, using a phosphorylated active-site intermediate. In Desulfosudis oleivorans (strain DSM 6200 / JCM 39069 / Hxd3) (Desulfococcus oleovorans), this protein is Nucleoside diphosphate kinase.